The following is a 325-amino-acid chain: Ubiquitin thioesterase OTU1 (325 aa).

Residues 7-86 (RIRSKTGVEN…NVSSISSNPG (80 aa)) form a UBX-like region. In terms of domain architecture, OTU spans 123-246 (ATRRVTDDDN…GIHYDALSIC (124 aa)). The cys-loop stretch occupies residues 128 to 134 (TDDDNSC). Asp131 is a catalytic residue. Residue Cys134 is the Nucleophile of the active site. The variable-loop stretch occupies residues 185 to 195 (IQNPKNWGGAI). The his-loop stretch occupies residues 235-239 (YDGIH). Position 238 (Ile238) interacts with substrate. The active site involves His239. Positions 265 to 270 (KDSLAK) are S2 site. Residues 292–316 (LICLNCNKTLKGEKEAAIHASTTGH) form a C2H2-type zinc finger. Residue His316 is part of the active site.

Its subcellular location is the cytoplasm. It carries out the reaction Thiol-dependent hydrolysis of ester, thioester, amide, peptide and isopeptide bonds formed by the C-terminal Gly of ubiquitin (a 76-residue protein attached to proteins as an intracellular targeting signal).. Its function is as follows. Hydrolase that can remove conjugated ubiquitin from proteins and may therefore play an important regulatory role at the level of protein turnover by preventing degradation. The protein is Ubiquitin thioesterase OTU1 (yod1) of Dictyostelium discoideum (Social amoeba).